Consider the following 123-residue polypeptide: Putative iron-sulfur cluster insertion protein ErpA (123 aa).

Positions 51, 115, and 117 each coordinate iron-sulfur cluster.

This sequence belongs to the HesB/IscA family. Homodimer. Requires iron-sulfur cluster as cofactor.

Its function is as follows. Required for insertion of 4Fe-4S clusters. In Burkholderia lata (strain ATCC 17760 / DSM 23089 / LMG 22485 / NCIMB 9086 / R18194 / 383), this protein is Putative iron-sulfur cluster insertion protein ErpA.